The following is a 365-amino-acid chain: NADH-quinone oxidoreductase subunit H (365 aa).

8 helical membrane-spanning segments follow: residues 27–47, 99–119, 133–153, 168–188, 206–226, 268–288, 294–314, and 329–349; these read LLLI…LTFA, FLFL…WAVV, ALLY…IAGW, AAQV…VLMM, FLNW…ISGV, ILVA…PVDI, IPGV…FLWF, and LGWK…GAVM.

It belongs to the complex I subunit 1 family. NDH-1 is composed of 14 different subunits. Subunits NuoA, H, J, K, L, M, N constitute the membrane sector of the complex.

The protein resides in the cell inner membrane. The catalysed reaction is a quinone + NADH + 5 H(+)(in) = a quinol + NAD(+) + 4 H(+)(out). Its function is as follows. NDH-1 shuttles electrons from NADH, via FMN and iron-sulfur (Fe-S) centers, to quinones in the respiratory chain. The immediate electron acceptor for the enzyme in this species is believed to be ubiquinone. Couples the redox reaction to proton translocation (for every two electrons transferred, four hydrogen ions are translocated across the cytoplasmic membrane), and thus conserves the redox energy in a proton gradient. This subunit may bind ubiquinone. The chain is NADH-quinone oxidoreductase subunit H from Nitrosomonas eutropha (strain DSM 101675 / C91 / Nm57).